The primary structure comprises 231 residues: NADH-ubiquinone oxidoreductase chain 4 (231 aa).

A run of 6 helical transmembrane segments spans residues 1 to 21, 34 to 54, 63 to 85, 89 to 111, 124 to 146, and 169 to 189; these read PIAG…YGII, LFLP…LTCL, IAYS…TPWG, AMAL…NMTY, GLHN…NIAI, and TIII…HMFL.

Belongs to the complex I subunit 4 family.

It localises to the mitochondrion membrane. The catalysed reaction is a ubiquinone + NADH + 5 H(+)(in) = a ubiquinol + NAD(+) + 4 H(+)(out). Functionally, core subunit of the mitochondrial membrane respiratory chain NADH dehydrogenase (Complex I) that is believed to belong to the minimal assembly required for catalysis. Complex I functions in the transfer of electrons from NADH to the respiratory chain. The immediate electron acceptor for the enzyme is believed to be ubiquinone. This Crotalus lepidus (Banded rock rattlesnake) protein is NADH-ubiquinone oxidoreductase chain 4 (MT-ND4).